Reading from the N-terminus, the 287-residue chain is Cysteine-rich repeat secretory protein 58 (287 aa).

Positions 1–20 are cleaved as a signal peptide; sequence METTKKLFALLCLFVTMNQA. Over 21–267 the chain is Extracellular; that stretch reads ISVSDPDDME…GSFSHRGNNK (247 aa). 2 Gnk2-homologous domains span residues 28–130 and 135–246; these read DMET…DKFF and ETNP…TYNS. N-linked (GlcNAc...) asparagine glycans are attached at residues Asn-39, Asn-43, Asn-59, Asn-68, Asn-89, Asn-99, Asn-107, Asn-208, and Asn-245. A helical membrane pass occupies residues 268–286; sequence LLGGMVLAVSVSVFAFLSL. Position 287 (Val-287) is a topological domain, cytoplasmic.

The protein belongs to the cysteine-rich repeat secretory protein family.

The protein localises to the membrane. This Arabidopsis thaliana (Mouse-ear cress) protein is Cysteine-rich repeat secretory protein 58 (CRRSP58).